A 287-amino-acid polypeptide reads, in one-letter code: Fructose-1,6-bisphosphatase class 1 (287 aa).

Mg(2+) contacts are provided by glutamate 67, aspartate 87, leucine 89, and aspartate 90. Substrate-binding positions include aspartate 90–serine 93, tyrosine 195, and lysine 225. A Mg(2+)-binding site is contributed by glutamate 231.

The protein belongs to the FBPase class 1 family. In terms of assembly, homotetramer. The cofactor is Mg(2+).

It is found in the cytoplasm. The catalysed reaction is beta-D-fructose 1,6-bisphosphate + H2O = beta-D-fructose 6-phosphate + phosphate. It participates in carbohydrate biosynthesis; gluconeogenesis. The chain is Fructose-1,6-bisphosphatase class 1 from Halobacterium salinarum (strain ATCC 29341 / DSM 671 / R1).